A 425-amino-acid polypeptide reads, in one-letter code: Glutamate-1-semialdehyde 2,1-aminomutase (425 aa).

Residue K265 is modified to N6-(pyridoxal phosphate)lysine.

This sequence belongs to the class-III pyridoxal-phosphate-dependent aminotransferase family. HemL subfamily. As to quaternary structure, homodimer. It depends on pyridoxal 5'-phosphate as a cofactor.

Its subcellular location is the cytoplasm. The enzyme catalyses (S)-4-amino-5-oxopentanoate = 5-aminolevulinate. It participates in porphyrin-containing compound metabolism; protoporphyrin-IX biosynthesis; 5-aminolevulinate from L-glutamyl-tRNA(Glu): step 2/2. The sequence is that of Glutamate-1-semialdehyde 2,1-aminomutase from Laribacter hongkongensis (strain HLHK9).